Reading from the N-terminus, the 396-residue chain is Alanine racemase (396 aa).

Lys46 acts as the Proton acceptor; specific for D-alanine in catalysis. N6-(pyridoxal phosphate)lysine is present on Lys46. Arg145 lines the substrate pocket. Tyr280 acts as the Proton acceptor; specific for L-alanine in catalysis. Residue Met328 coordinates substrate.

Belongs to the alanine racemase family. It depends on pyridoxal 5'-phosphate as a cofactor.

The enzyme catalyses L-alanine = D-alanine. It functions in the pathway amino-acid biosynthesis; D-alanine biosynthesis; D-alanine from L-alanine: step 1/1. Its function is as follows. Catalyzes the interconversion of L-alanine and D-alanine. May also act on other amino acids. This Brucella ovis (strain ATCC 25840 / 63/290 / NCTC 10512) protein is Alanine racemase (alr).